Here is a 61-residue protein sequence, read N- to C-terminus: MLKYAIIFAIISLIAGALGFSGVAAGAAGIAKILFFLFLVVAVIFIVLAVLGVGAARSVMK.

The next 2 helical transmembrane spans lie at 5 to 25 (AIIFAIISLIAGALGFSGVAA) and 33 to 53 (ILFFLFLVVAVIFIVLAVLGV).

This sequence belongs to the UPF0391 family.

The protein localises to the cell membrane. The chain is UPF0391 membrane protein Aave_0978 from Paracidovorax citrulli (strain AAC00-1) (Acidovorax citrulli).